The sequence spans 154 residues: Small ribosomal subunit protein eS10 (154 aa).

Residues 91–154 (ATMKKQASRP…ERSAPAPQQN (64 aa)) are disordered. Over residues 124-135 (RGDRRQGGDRRG) the composition is skewed to basic and acidic residues.

The protein belongs to the eukaryotic ribosomal protein eS10 family.

The protein localises to the cytoplasm. The chain is Small ribosomal subunit protein eS10 (rps10) from Dictyostelium discoideum (Social amoeba).